The chain runs to 1135 residues: uncharacterized protein (1135 aa).

The N-terminal stretch at 1–28 (MALFPRGILIALVLSFVLNLGLVTKIHA) is a signal peptide. The next 7 helical transmembrane spans lie at 332 to 352 (IVTA…LLAG), 359 to 379 (EYIN…GINI), 393 to 413 (MIQW…NWVM), 495 to 515 (MLVS…AFMV), 522 to 542 (MISI…FLFA), 555 to 575 (MISF…MFAV), and 700 to 720 (IKNI…MYNF).

This sequence belongs to the TrbL/VirB6 family.

The protein resides in the cell membrane. This is an uncharacterized protein from Rickettsia typhi (strain ATCC VR-144 / Wilmington).